A 385-amino-acid polypeptide reads, in one-letter code: Succinate--CoA ligase [ADP-forming] subunit beta (385 aa).

The ATP-grasp domain occupies 9-241; that stretch reads KELLRDFGIN…IDEEEPSELE (233 aa). ATP is bound by residues Lys46, 53-55, Glu99, Thr102, and Glu107; that span reads GRG. The Mg(2+) site is built by Asn196 and Asp210. Substrate is bound by residues Asn261 and 318 to 320; that span reads GIV.

The protein belongs to the succinate/malate CoA ligase beta subunit family. As to quaternary structure, heterotetramer of two alpha and two beta subunits. Mg(2+) serves as cofactor.

The catalysed reaction is succinate + ATP + CoA = succinyl-CoA + ADP + phosphate. It carries out the reaction GTP + succinate + CoA = succinyl-CoA + GDP + phosphate. It participates in carbohydrate metabolism; tricarboxylic acid cycle; succinate from succinyl-CoA (ligase route): step 1/1. In terms of biological role, succinyl-CoA synthetase functions in the citric acid cycle (TCA), coupling the hydrolysis of succinyl-CoA to the synthesis of either ATP or GTP and thus represents the only step of substrate-level phosphorylation in the TCA. The beta subunit provides nucleotide specificity of the enzyme and binds the substrate succinate, while the binding sites for coenzyme A and phosphate are found in the alpha subunit. This chain is Succinate--CoA ligase [ADP-forming] subunit beta, found in Campylobacter fetus subsp. fetus (strain 82-40).